The chain runs to 434 residues: Histidinol dehydrogenase (434 aa).

Residues Tyr129, Gln191, and Asn214 each contribute to the NAD(+) site. Residues Ser240, Gln262, and His265 each contribute to the substrate site. Positions 262 and 265 each coordinate Zn(2+). Residues Glu329 and His330 each act as proton acceptor in the active site. Residues His330, Asp363, Glu417, and His422 each contribute to the substrate site. Asp363 is a Zn(2+) binding site. Residue His422 participates in Zn(2+) binding.

Belongs to the histidinol dehydrogenase family. Requires Zn(2+) as cofactor.

The catalysed reaction is L-histidinol + 2 NAD(+) + H2O = L-histidine + 2 NADH + 3 H(+). It functions in the pathway amino-acid biosynthesis; L-histidine biosynthesis; L-histidine from 5-phospho-alpha-D-ribose 1-diphosphate: step 9/9. Its function is as follows. Catalyzes the sequential NAD-dependent oxidations of L-histidinol to L-histidinaldehyde and then to L-histidine. The chain is Histidinol dehydrogenase from Colwellia psychrerythraea (strain 34H / ATCC BAA-681) (Vibrio psychroerythus).